We begin with the raw amino-acid sequence, 245 residues long: 1-(5-phosphoribosyl)-5-[(5-phosphoribosylamino)methylideneamino] imidazole-4-carboxamide isomerase (245 aa).

The Proton acceptor role is filled by Asp-7. Asp-129 functions as the Proton donor in the catalytic mechanism.

It belongs to the HisA/HisF family.

It localises to the cytoplasm. It carries out the reaction 1-(5-phospho-beta-D-ribosyl)-5-[(5-phospho-beta-D-ribosylamino)methylideneamino]imidazole-4-carboxamide = 5-[(5-phospho-1-deoxy-D-ribulos-1-ylimino)methylamino]-1-(5-phospho-beta-D-ribosyl)imidazole-4-carboxamide. It functions in the pathway amino-acid biosynthesis; L-histidine biosynthesis; L-histidine from 5-phospho-alpha-D-ribose 1-diphosphate: step 4/9. The chain is 1-(5-phosphoribosyl)-5-[(5-phosphoribosylamino)methylideneamino] imidazole-4-carboxamide isomerase from Escherichia fergusonii (strain ATCC 35469 / DSM 13698 / CCUG 18766 / IAM 14443 / JCM 21226 / LMG 7866 / NBRC 102419 / NCTC 12128 / CDC 0568-73).